We begin with the raw amino-acid sequence, 430 residues long: MKQRIKTRHMILGVMCLMYFIAYIDRVNISVAAPLIREEMGLTTSQLGLVFSAFAYPYAAMQILGGWMADKFGPKKVLIVLSLIWGVATVLTGFAGSVLILVVLRFVLGIGEGGAFPTATRAFTYWMPVAERGFAQGITHSFARLGGAITPPVVLVIVAAAGWREAFIVLGAVSLGWTLLYAFFFKDSPDKHSRVTAQELQEIGYRHGDSRQAAKAATPWRRLFRRMWLVTFVDFCYGWSLWVYLTWLPSYLKEARGFDLKQLALFTALPLMAGVVGDTLGGVLSDRIYKRTGNLRLARGAVLFVGLAGSLMFIAPMTFTADAVNAVILLSLSFFFLELTNAVLWSLPLDIAGKYAGTAGGMMNTGFGVAGMVSPVVFGYLIERTGSYDLPFMISGALLGVGALASLFINPLLTVDSPDEKAGEVRHALP.

The next 10 helical transmembrane spans lie at L47–W67, L83–V103, F142–G162, E165–F185, W228–L248, L263–V283, A301–A321, V327–L347, M362–I382, and L390–N410.

The protein belongs to the major facilitator superfamily.

It is found in the cell membrane. In terms of biological role, may transport sulfoacetate into the cell. The protein is Probable sulfoacetate transporter SauU (sauU) of Cupriavidus necator (strain ATCC 17699 / DSM 428 / KCTC 22496 / NCIMB 10442 / H16 / Stanier 337) (Ralstonia eutropha).